A 302-amino-acid chain; its full sequence is MIAASFLLNLLIYPFLINLFRKKSVGQYIRKEGPDLHGYKEGTPTMGGILFVLIGLLFGVLSKENGVILTGAFLFFLIGFLDDFLSIAKKNSTGLRAYQKALLQIAAASVVIAFSQPETAVDFFGIKLEMGAWYYLLALIVIVGSSNAMNLTDGLDGLAGWVYISGAIPYWFFLKEKGFSENIIILLSAGVLAFLIFNSKPARIFMGDTGSIALGGTLGVVSVLTKTEFYLIVFFPILVVETLSVILQILSFKLFKRRIFRMAPLHHHFELLSWEEEKIVAVFTIFNLISSLIALEVFGVIG.

The next 10 helical transmembrane spans lie at 1–21 (MIAA…NLFR), 42–62 (GTPT…GVLS), 67–87 (VILT…FLSI), 101–121 (ALLQ…ETAV), 123–143 (FFGI…IVIV), 154–174 (GLDG…WFFL), 178–198 (GFSE…LIFN), 204–224 (IFMG…VSVL), 229–249 (FYLI…ILQI), and 279–299 (IVAV…EVFG).

This sequence belongs to the glycosyltransferase 4 family. MraY subfamily. Mg(2+) is required as a cofactor.

It is found in the cell inner membrane. It carries out the reaction UDP-N-acetyl-alpha-D-muramoyl-L-alanyl-gamma-D-glutamyl-meso-2,6-diaminopimeloyl-D-alanyl-D-alanine + di-trans,octa-cis-undecaprenyl phosphate = di-trans,octa-cis-undecaprenyl diphospho-N-acetyl-alpha-D-muramoyl-L-alanyl-D-glutamyl-meso-2,6-diaminopimeloyl-D-alanyl-D-alanine + UMP. Its pathway is cell wall biogenesis; peptidoglycan biosynthesis. Its function is as follows. Catalyzes the initial step of the lipid cycle reactions in the biosynthesis of the cell wall peptidoglycan: transfers peptidoglycan precursor phospho-MurNAc-pentapeptide from UDP-MurNAc-pentapeptide onto the lipid carrier undecaprenyl phosphate, yielding undecaprenyl-pyrophosphoryl-MurNAc-pentapeptide, known as lipid I. The protein is Phospho-N-acetylmuramoyl-pentapeptide-transferase of Thermotoga neapolitana (strain ATCC 49049 / DSM 4359 / NBRC 107923 / NS-E).